The chain runs to 670 residues: DNA ligase (670 aa).

NAD(+) contacts are provided by residues Asp-32–Asp-36, Ser-81–Leu-82, and Glu-114. Lys-116 functions as the N6-AMP-lysine intermediate in the catalytic mechanism. Residues Arg-137, Glu-174, Lys-291, and Lys-315 each coordinate NAD(+). The Zn(2+) site is built by Cys-409, Cys-412, Cys-427, and Cys-433. The 79-residue stretch at Ala-592 to Arg-670 folds into the BRCT domain.

Belongs to the NAD-dependent DNA ligase family. LigA subfamily. The cofactor is Mg(2+). Mn(2+) is required as a cofactor.

It carries out the reaction NAD(+) + (deoxyribonucleotide)n-3'-hydroxyl + 5'-phospho-(deoxyribonucleotide)m = (deoxyribonucleotide)n+m + AMP + beta-nicotinamide D-nucleotide.. Functionally, DNA ligase that catalyzes the formation of phosphodiester linkages between 5'-phosphoryl and 3'-hydroxyl groups in double-stranded DNA using NAD as a coenzyme and as the energy source for the reaction. It is essential for DNA replication and repair of damaged DNA. This is DNA ligase from Haemophilus influenzae (strain PittGG).